We begin with the raw amino-acid sequence, 233 residues long: Large ribosomal subunit protein uL1 (233 aa).

It belongs to the universal ribosomal protein uL1 family. As to quaternary structure, part of the 50S ribosomal subunit.

In terms of biological role, binds directly to 23S rRNA. The L1 stalk is quite mobile in the ribosome, and is involved in E site tRNA release. Its function is as follows. Protein L1 is also a translational repressor protein, it controls the translation of the L11 operon by binding to its mRNA. This Rhodospirillum rubrum (strain ATCC 11170 / ATH 1.1.1 / DSM 467 / LMG 4362 / NCIMB 8255 / S1) protein is Large ribosomal subunit protein uL1.